The sequence spans 124 residues: MKNVLIIFGKPYCSICENVSDAVEELKSEYDILHVDILSFFLKDGDSSMLGDVKRGTLIGNFAAHLSNYIVSIFKYNPQTKQMAFVDINKSLDFTKTDKSLVNLEILKSEIEKANYGVWPPVTE.

An intrachain disulfide couples C13 to C16.

The protein belongs to the glutaredoxin family. Homodimer.

It localises to the host cytoplasm. Functionally, glutaredoxin necessary for virion morphogenesis and virus replication. Functions as a thiol-disulfide transfer protein between membrane-associated OPG128 and substrates OPG095 or OPG053. The complete pathway for formation of disulfide bonds in intracellular virion membrane proteins sequentially involves oxidation of OPG072, OPG128 and OPG088. Exhibit thioltransferase and dehydroascorbate reductase activities in vitro. In Homo sapiens (Human), this protein is Glutaredoxin-2 (OPG088).